Reading from the N-terminus, the 184-residue chain is ATP synthase subunit b, chloroplastic (184 aa).

A helical membrane pass occupies residues Leu27–Leu49.

This sequence belongs to the ATPase B chain family. In terms of assembly, F-type ATPases have 2 components, F(1) - the catalytic core - and F(0) - the membrane proton channel. F(1) has five subunits: alpha(3), beta(3), gamma(1), delta(1), epsilon(1). F(0) has four main subunits: a(1), b(1), b'(1) and c(10-14). The alpha and beta chains form an alternating ring which encloses part of the gamma chain. F(1) is attached to F(0) by a central stalk formed by the gamma and epsilon chains, while a peripheral stalk is formed by the delta, b and b' chains.

It localises to the plastid. The protein resides in the chloroplast thylakoid membrane. F(1)F(0) ATP synthase produces ATP from ADP in the presence of a proton or sodium gradient. F-type ATPases consist of two structural domains, F(1) containing the extramembraneous catalytic core and F(0) containing the membrane proton channel, linked together by a central stalk and a peripheral stalk. During catalysis, ATP synthesis in the catalytic domain of F(1) is coupled via a rotary mechanism of the central stalk subunits to proton translocation. In terms of biological role, component of the F(0) channel, it forms part of the peripheral stalk, linking F(1) to F(0). This chain is ATP synthase subunit b, chloroplastic, found in Arabidopsis thaliana (Mouse-ear cress).